A 233-amino-acid chain; its full sequence is MSQSNRELVVDFLSYKLSQKGYSWSQFSDVEENRTEAPEETEPERETPSAINGNPSWHLADSPAVNGATGHSSSLDAREVIPMAAVKQALREAGDEFELRYRRAFSDLTSQLHITPGTAYQSFEQVVNELFRDGVNWGRIVAFFSFGGALCVESVDKEMQVLVSRIASWMATYLNDHLEPWIQENGGWDTFVDLYGNNAAAESRKGQERFNRWFLTGMTVAGVVLLGSLFSRK.

The short motif at 4–24 (SNRELVVDFLSYKLSQKGYSW) is the BH4 element. The segment at 27–73 (FSDVEENRTEAPEETEPERETPSAINGNPSWHLADSPAVNGATGHSS) is disordered. Ser-49 bears the Phosphoserine; by PLK3 mark. Ser-62 is subject to Phosphoserine; by CDK1. The short motif at 86 to 100 (VKQALREAGDEFELR) is the BH3 element. Positions 129–148 (ELFRDGVNWGRIVAFFSFGG) match the BH1 motif. A BH2 motif is present at residues 180 to 195 (PWIQENGGWDTFVDLY). A helical membrane pass occupies residues 210-226 (FNRWFLTGMTVAGVVLL).

This sequence belongs to the Bcl-2 family. As to quaternary structure, homodimer. Interacts with BCL2L11. Interacts with BAD. Interacts with PGAM5. Interacts with HEBP2. Interacts with p53/TP53 and BBC3; interaction with BBC3 disrupts the interaction with p53/TP53. Interacts with ATP5F1A and ATP5F1B; the interactions mediate the association of isoform Bcl-X(L) with the mitochondrial membrane ATP synthase F(1)F(0) ATP synthase. Interacts with VDAC1. Interacts with BCL2L11 (via BH3). Interacts with RNF183. Interacts with GIMAP3/IAN4 and GIMAP5/IAN5. Interacts with GIMAP5 and HSPA8/HSC70; the interaction between HSPA8 and BCL2L1 is impaired in the absence of GIMAP5. Interacts with isoform 4 of CLU; this interaction releases and activates BAX and promotes cell death. In terms of assembly, forms heterodimers with BAX, BAK or BCL2; heterodimerization with BAX does not seem to be required for anti-apoptotic activity. Interacts with isoform 1 of SIVA1; the interaction inhibits the anti-apoptotic activity. Interacts with IKZF3. Interacts with RTL10/BOP. Interacts with DNM1L and CLTA; DNM1L and BCL2L1 isoform BCL-X(L) may form a complex in synaptic vesicles that also contains clathrin and MFF. Interacts (via the loop between motifs BH4 and BH3) with NLRP1 (via LRR repeats), but not with NLRP2, NLRP3, NLRP4, PYCARD, nor MEFV. Interacts with BECN1. In terms of processing, proteolytically cleaved by caspases during apoptosis. The cleaved protein, lacking the BH4 motif, has pro-apoptotic activity. Phosphorylated on Ser-62 by CDK1. This phosphorylation is partial in normal mitotic cells, but complete in G2-arrested cells upon DNA-damage, thus promoting subsequent apoptosis probably by triggering caspases-mediated proteolysis. Phosphorylated by PLK3, leading to regulate the G2 checkpoint and progression to cytokinesis during mitosis. Phosphorylation at Ser-49 appears during the S phase and G2, disappears rapidly in early mitosis during prometaphase, metaphase and early anaphase, and re-appears during telophase and cytokinesis. Post-translationally, ubiquitinated by RNF183 during prolonged ER stress, leading to degradation by the proteosome. As to expression, expressed in most tissues. Bcl-X(beta) is specifically expressed in cerebellum, heart, and thymus. In the ovary, the predominant form is Bcl-X(L), with a small but detectable level of Bcl-X(S).

The protein resides in the mitochondrion inner membrane. It localises to the mitochondrion outer membrane. The protein localises to the mitochondrion matrix. Its subcellular location is the cytoplasmic vesicle. It is found in the secretory vesicle. The protein resides in the synaptic vesicle membrane. It localises to the cytoplasm. The protein localises to the cytosol. Its subcellular location is the cytoskeleton. It is found in the microtubule organizing center. The protein resides in the centrosome. It localises to the nucleus membrane. Potent inhibitor of cell death. Inhibits activation of caspases. Appears to regulate cell death by blocking the voltage-dependent anion channel (VDAC) by binding to it and preventing the release of the caspase activator, CYC1, from the mitochondrial membrane. Also acts as a regulator of G2 checkpoint and progression to cytokinesis during mitosis. Functionally, isoform Bcl-X(L) also regulates presynaptic plasticity, including neurotransmitter release and recovery, number of axonal mitochondria as well as size and number of synaptic vesicle clusters. During synaptic stimulation, increases ATP availability from mitochondria through regulation of mitochondrial membrane ATP synthase F(1)F(0) activity and regulates endocytic vesicle retrieval in hippocampal neurons through association with DMN1L and stimulation of its GTPase activity in synaptic vesicles. May attenuate inflammation impairing NLRP1-inflammasome activation, hence CASP1 activation and IL1B release. In terms of biological role, isoform Bcl-X(S) promotes apoptosis. This is Bcl-2-like protein 1 (Bcl2l1) from Rattus norvegicus (Rat).